The chain runs to 160 residues: Epithelial membrane protein 1 (160 aa).

A helical membrane pass occupies residues 1 to 21 (MLVLLAGLFVVHIATAIMLFV). A glycan (N-linked (GlcNAc...) asparagine) is linked at Asn43. Helical transmembrane passes span 67 to 87 (FMIL…FQLF), 95 to 115 (FFLS…GVSI), and 137 to 157 (FILT…YMVL).

Belongs to the PMP-22/EMP/MP20 family. In terms of tissue distribution, most prominently found in the gastrointestinal tract, skin, lung, and brain but not in liver.

It localises to the membrane. This Rattus norvegicus (Rat) protein is Epithelial membrane protein 1 (Emp1).